Reading from the N-terminus, the 356-residue chain is NADH-quinone oxidoreductase subunit H (356 aa).

Helical transmembrane passes span Ile-18–Ile-38, Gly-87–Ile-107, Val-120–Gly-140, Ile-166–Val-186, Trp-202–Val-222, Ala-265–Ile-285, Trp-292–Met-312, and Leu-328–Leu-348.

Belongs to the complex I subunit 1 family. In terms of assembly, NDH-1 is composed of 14 different subunits. Subunits NuoA, H, J, K, L, M, N constitute the membrane sector of the complex.

The protein localises to the cell inner membrane. The enzyme catalyses a quinone + NADH + 5 H(+)(in) = a quinol + NAD(+) + 4 H(+)(out). In terms of biological role, NDH-1 shuttles electrons from NADH, via FMN and iron-sulfur (Fe-S) centers, to quinones in the respiratory chain. The immediate electron acceptor for the enzyme in this species is believed to be ubiquinone. Couples the redox reaction to proton translocation (for every two electrons transferred, four hydrogen ions are translocated across the cytoplasmic membrane), and thus conserves the redox energy in a proton gradient. This subunit may bind ubiquinone. The chain is NADH-quinone oxidoreductase subunit H from Nitrobacter hamburgensis (strain DSM 10229 / NCIMB 13809 / X14).